The following is a 116-amino-acid chain: Hydrogenase maturation factor HypA (116 aa).

Histidine 2 contributes to the Ni(2+) binding site. Zn(2+) is bound by residues cysteine 73, cysteine 76, cysteine 89, and cysteine 92.

Belongs to the HypA/HybF family.

Its function is as follows. Involved in the maturation of [NiFe] hydrogenases. Required for nickel insertion into the metal center of the hydrogenase. The sequence is that of Hydrogenase maturation factor HypA from Chlorobium limicola (strain DSM 245 / NBRC 103803 / 6330).